The following is a 1689-amino-acid chain: Cullin-7 (1689 aa).

One can recognise a CPH domain in the interval 349–422 (RASFASFNTY…HWHMLEILGF (74 aa)). Residues 793-972 (PIQIPFFDVF…HTRLFYMVRA (180 aa)) enclose the DOC domain. Over residues 1321-1337 (VAHEDSGREDKSKKEEA) the composition is skewed to basic and acidic residues. The disordered stretch occupies residues 1321 to 1371 (VAHEDSGREDKSKKEEAIGEAAAVAMAEEEDQGKKEEGEEEGEGEDEEEER). Acidic residues predominate over residues 1358 to 1370 (GEEEGEGEDEEEE). A Glycyl lysine isopeptide (Lys-Gly) (interchain with G-Cter in NEDD8) cross-link involves residue lysine 1567.

The protein belongs to the cullin family. In terms of assembly, component of the 3M complex, composed of core components CUL7, CCDC8 and OBSL1. Component of the Cul7-RING(FBXW8) complex consisting of CUL7, RBX1, SKP1 and FBXW8. Within the Cul7-RING(FBXW8) complex interacts with FBXW8 and RBX1, but not with SKP1. Interacts with CUL1 (via the C-terminal domain); the interaction seems to be mediated by FBXW8; it is likely specific to FBXW8, but not other F-box proteins. Interacts (via the CPH domain) with p53/TP53; the interaction preferentially involves tetrameric and dimeric p53/TP53; this interaction recruits p53/TP53 for ubiquitination by neddylated CUL1-RBX1. The CUL7-CUL9 heterodimer seems to interact specifically with p53/TP53. Interacts with FBXW8; interaction is mutually exclusive of binding to CUL9 or p53/TP53. Interacts with CUL9; leading to inhibited CUL9 activity. Interacts with OBSL1. Interacts (as part of the 3M complex) with HDAC4 and HDAC5; it is negatively regulated by ANKRA2.

Its subcellular location is the cytoplasm. It is found in the cytoskeleton. The protein localises to the microtubule organizing center. The protein resides in the centrosome. It localises to the perinuclear region. Its subcellular location is the golgi apparatus. It functions in the pathway protein modification; protein ubiquitination. In terms of biological role, core component of the 3M and Cul7-RING(FBXW8) complexes, which mediate the ubiquitination and subsequent proteasomal degradation of target proteins. Core component of the 3M complex, a complex required to regulate microtubule dynamics and genome integrity. It is unclear how the 3M complex regulates microtubules, it could act by controlling the level of a microtubule stabilizer. The Cul7-RING(FBXW8) complex alone lacks ubiquitination activity and does not promote polyubiquitination and proteasomal degradation of p53/TP53. However it mediates recruitment of p53/TP53 for ubiquitination by neddylated CUL1-RBX1. Interaction with CUL9 is required to inhibit CUL9 activity and ubiquitination of BIRC5. The Cul7-RING(FBXW8) complex also mediates ubiquitination and consequent degradation of target proteins such as GORASP1, IRS1 and MAP4K1/HPK1. Ubiquitination of GORASP1 regulates Golgi morphogenesis and dendrite patterning in brain. Mediates ubiquitination and degradation of IRS1 in a mTOR-dependent manner: the Cul7-RING(FBXW8) complex recognizes and binds IRS1 previously phosphorylated by S6 kinase (RPS6KB1 or RPS6KB2). The Cul7-RING(FBXW8) complex also mediates ubiquitination of MAP4K1/HPK1: recognizes and binds autophosphorylated MAP4K1/HPK1, leading to its degradation, thereby affecting cell proliferation and differentiation. Acts as a regulator in trophoblast cell epithelial-mesenchymal transition and placental development. While the Cul7-RING(FBXW8) and the 3M complexes are associated and involved in common processes, CUL7 and the Cul7-RING(FBXW8) complex may have additional functions. Probably plays a role in the degradation of proteins involved in endothelial proliferation and/or differentiation. The sequence is that of Cullin-7 (Cul7) from Mus musculus (Mouse).